Reading from the N-terminus, the 248-residue chain is Myelin protein P0 (248 aa).

The signal sequence occupies residues 1–29 (MAPGAPSSSPSPILAVLLFSSLVLSPAQA). An Ig-like V-type domain is found at 30-143 (IVVYTDREVH…DIVGKTSQVT (114 aa)). The Extracellular portion of the chain corresponds to 30–153 (IVVYTDREVH…LYVFEKVPTR (124 aa)). A disulfide bridge links cysteine 50 with cysteine 127. Asparagine 122 carries N-linked (GlcNAc...) (complex) asparagine glycosylation. Residues 154–179 (YGVVLGAVIGGVLGVVLLLLLLFYVV) form a helical membrane-spanning segment. At 180 to 248 (RYCWLRRQAA…GLGESRKDKK (69 aa)) the chain is on the cytoplasmic side. Serine 210 bears the Phosphoserine; by PKC mark. A disordered region spans residues 224-248 (DHSRSTKAVSEKKAKGLGESRKDKK). Residues serine 226 and serine 228 each carry the phosphoserine modification. Phosphoserine; by PKC occurs at positions 233 and 243.

It belongs to the myelin P0 protein family. In terms of assembly, homodimer and homotetramer. Post-translationally, N-glycosylated; contains sulfate-substituted glycan. As to expression, found only in peripheral nervous system Schwann cells.

The protein resides in the cell membrane. It localises to the myelin membrane. Is an adhesion molecule necessary for normal myelination in the peripheral nervous system. It mediates adhesion between adjacent myelin wraps and ultimately drives myelin compaction. The sequence is that of Myelin protein P0 (MPZ) from Homo sapiens (Human).